The primary structure comprises 365 residues: Peptide chain release factor 2 (365 aa).

An N5-methylglutamine modification is found at Q252.

The protein belongs to the prokaryotic/mitochondrial release factor family. In terms of processing, methylated by PrmC. Methylation increases the termination efficiency of RF2.

The protein resides in the cytoplasm. Functionally, peptide chain release factor 2 directs the termination of translation in response to the peptide chain termination codons UGA and UAA. The protein is Peptide chain release factor 2 of Klebsiella pneumoniae (strain 342).